Here is a 422-residue protein sequence, read N- to C-terminus: 4-hydroxy-3-methylbut-2-en-1-yl diphosphate synthase (flavodoxin) (422 aa).

[4Fe-4S] cluster contacts are provided by C316, C319, C362, and E369.

Belongs to the IspG family. [4Fe-4S] cluster is required as a cofactor.

The enzyme catalyses (2E)-4-hydroxy-3-methylbut-2-enyl diphosphate + oxidized [flavodoxin] + H2O + 2 H(+) = 2-C-methyl-D-erythritol 2,4-cyclic diphosphate + reduced [flavodoxin]. It participates in isoprenoid biosynthesis; isopentenyl diphosphate biosynthesis via DXP pathway; isopentenyl diphosphate from 1-deoxy-D-xylulose 5-phosphate: step 5/6. Its function is as follows. Converts 2C-methyl-D-erythritol 2,4-cyclodiphosphate (ME-2,4cPP) into 1-hydroxy-2-methyl-2-(E)-butenyl 4-diphosphate. The polypeptide is 4-hydroxy-3-methylbut-2-en-1-yl diphosphate synthase (flavodoxin) (Anaplasma marginale (strain St. Maries)).